Consider the following 154-residue polypeptide: CS6 fimbrial subunit A (154 aa).

Residues 1-18 form the signal peptide; it reads MKKTIGLILILASFGSHA.

It is found in the fimbrium. In terms of biological role, fimbriae (also called pili), polar filaments radiating from the surface of the bacterium to a length of 0.5-1.5 micrometers and numbering 100-300 per cell, enable bacteria to colonize the epithelium of specific host organs. In Escherichia coli, this protein is CS6 fimbrial subunit A (cssA).